The primary structure comprises 77 residues: Acyl carrier protein (77 aa).

The Carrier domain maps to 1-76 (MAVFDEVKDV…DVVNYIDGLK (76 aa)). S36 carries the post-translational modification O-(pantetheine 4'-phosphoryl)serine.

Belongs to the acyl carrier protein (ACP) family. In terms of processing, 4'-phosphopantetheine is transferred from CoA to a specific serine of apo-ACP by AcpS. This modification is essential for activity because fatty acids are bound in thioester linkage to the sulfhydryl of the prosthetic group.

The protein resides in the cytoplasm. Its pathway is lipid metabolism; fatty acid biosynthesis. In terms of biological role, carrier of the growing fatty acid chain in fatty acid biosynthesis. The protein is Acyl carrier protein of Campylobacter fetus subsp. fetus (strain 82-40).